Here is a 287-residue protein sequence, read N- to C-terminus: Diaminopimelate epimerase (287 aa).

Substrate-binding residues include asparagine 15 and asparagine 66. Catalysis depends on cysteine 75, which acts as the Proton donor. Substrate contacts are provided by residues 76 to 77, asparagine 170, asparagine 203, and 221 to 222; these read GN and ER. The active-site Proton acceptor is the cysteine 230. 231 to 232 is a substrate binding site; the sequence is GT.

The protein belongs to the diaminopimelate epimerase family. In terms of assembly, homodimer.

The protein localises to the cytoplasm. The enzyme catalyses (2S,6S)-2,6-diaminopimelate = meso-2,6-diaminopimelate. Its pathway is amino-acid biosynthesis; L-lysine biosynthesis via DAP pathway; DL-2,6-diaminopimelate from LL-2,6-diaminopimelate: step 1/1. Catalyzes the stereoinversion of LL-2,6-diaminopimelate (L,L-DAP) to meso-diaminopimelate (meso-DAP), a precursor of L-lysine and an essential component of the bacterial peptidoglycan. The polypeptide is Diaminopimelate epimerase (Desulfovibrio desulfuricans (strain ATCC 27774 / DSM 6949 / MB)).